The sequence spans 307 residues: F-box protein PP2-B7 (307 aa).

The F-box domain occupies 37–83; sequence PLSLGDLPEECISLIISFTSPRDACVFALVSKTFESAVQSDIVWEKF.

This is F-box protein PP2-B7 (PP2B7) from Arabidopsis thaliana (Mouse-ear cress).